We begin with the raw amino-acid sequence, 872 residues long: Paladin (872 aa).

The segment at Met-1–Leu-37 is disordered. Gly-2 carries the N-myristoyl glycine lipid modification. Residues Arg-186–Ala-210 are a coiled coil.

Belongs to the paladin family.

It localises to the cytoplasm. The protein resides in the cytosol. The protein is Paladin (pald1) of Xenopus tropicalis (Western clawed frog).